A 245-amino-acid polypeptide reads, in one-letter code: Pyridoxine 5'-phosphate synthase (245 aa).

A 3-amino-2-oxopropyl phosphate-binding site is contributed by N7. 9 to 10 contacts 1-deoxy-D-xylulose 5-phosphate; the sequence is DH. 3-amino-2-oxopropyl phosphate is bound at residue R18. H43 acts as the Proton acceptor in catalysis. 1-deoxy-D-xylulose 5-phosphate is bound by residues R45 and H50. E70 acts as the Proton acceptor in catalysis. T100 lines the 1-deoxy-D-xylulose 5-phosphate pocket. H190 (proton donor) is an active-site residue. Residues G191 and 212-213 contribute to the 3-amino-2-oxopropyl phosphate site; that span reads GH.

It belongs to the PNP synthase family. In terms of assembly, homooctamer; tetramer of dimers.

It localises to the cytoplasm. It catalyses the reaction 3-amino-2-oxopropyl phosphate + 1-deoxy-D-xylulose 5-phosphate = pyridoxine 5'-phosphate + phosphate + 2 H2O + H(+). It functions in the pathway cofactor biosynthesis; pyridoxine 5'-phosphate biosynthesis; pyridoxine 5'-phosphate from D-erythrose 4-phosphate: step 5/5. Its function is as follows. Catalyzes the complicated ring closure reaction between the two acyclic compounds 1-deoxy-D-xylulose-5-phosphate (DXP) and 3-amino-2-oxopropyl phosphate (1-amino-acetone-3-phosphate or AAP) to form pyridoxine 5'-phosphate (PNP) and inorganic phosphate. The polypeptide is Pyridoxine 5'-phosphate synthase (Prochlorococcus marinus (strain MIT 9303)).